We begin with the raw amino-acid sequence, 201 residues long: 3-isopropylmalate dehydratase small subunit (201 aa).

The protein belongs to the LeuD family. LeuD type 1 subfamily. In terms of assembly, heterodimer of LeuC and LeuD.

The enzyme catalyses (2R,3S)-3-isopropylmalate = (2S)-2-isopropylmalate. It functions in the pathway amino-acid biosynthesis; L-leucine biosynthesis; L-leucine from 3-methyl-2-oxobutanoate: step 2/4. Catalyzes the isomerization between 2-isopropylmalate and 3-isopropylmalate, via the formation of 2-isopropylmaleate. The sequence is that of 3-isopropylmalate dehydratase small subunit from Thermus thermophilus (strain ATCC BAA-163 / DSM 7039 / HB27).